A 442-amino-acid polypeptide reads, in one-letter code: Coiled-coil domain-containing protein 112 (442 aa).

Coiled-coil stretches lie at residues 23–116 and 217–249; these read LEEL…RRIE and LEEKKKESIQNWKTKKQQKKEEILKLKEKVDTV. Disordered stretches follow at residues 245-272, 289-312, and 392-442; these read KVDTVPLPSQSKAEDSPKQREEQRKKQK, KLASQLREEEEKERKQQRERQRQS, and EKVE…RQGI. Composition is skewed to basic and acidic residues over residues 256–268 and 294–310; these read KAEDSPKQREEQR and LREEEEKERKQQRERQR. A coiled-coil region spans residues 281–400; that stretch reads RKSLEMSAKL…KEKVENNVSR (120 aa).

The protein resides in the cytoplasm. It localises to the cytoskeleton. Its subcellular location is the microtubule organizing center. The protein localises to the centrosome. It is found in the centriolar satellite. This Mus musculus (Mouse) protein is Coiled-coil domain-containing protein 112 (Ccdc112).